The sequence spans 205 residues: MKLRGLYAITDSQLLSGKFLSYVEAALDGGVTLLQYRDKTSDESRRLREATELLKLCERYKTRLIINDDAELAARLGVGVHLGQTDGSLPDARALLGHKAIVGATCHGSLELAEQAKADGATYVAFGRFFNSLTKPGAPAVPLDLIAQVRARVHLPIAVIGGITLENAPQLVEHGADLLAVVHGLFGAENAQEVTRRAKAFMALL.

4-amino-2-methyl-5-(diphosphooxymethyl)pyrimidine is bound by residues 35–39 (QYRDK) and N67. D68 and D86 together coordinate Mg(2+). Residue T105 coordinates 4-amino-2-methyl-5-(diphosphooxymethyl)pyrimidine. Position 132–134 (132–134 (SLT)) interacts with 2-[(2R,5Z)-2-carboxy-4-methylthiazol-5(2H)-ylidene]ethyl phosphate. K135 is a 4-amino-2-methyl-5-(diphosphooxymethyl)pyrimidine binding site. Residue G162 coordinates 2-[(2R,5Z)-2-carboxy-4-methylthiazol-5(2H)-ylidene]ethyl phosphate.

The protein belongs to the thiamine-phosphate synthase family. Requires Mg(2+) as cofactor.

The enzyme catalyses 2-[(2R,5Z)-2-carboxy-4-methylthiazol-5(2H)-ylidene]ethyl phosphate + 4-amino-2-methyl-5-(diphosphooxymethyl)pyrimidine + 2 H(+) = thiamine phosphate + CO2 + diphosphate. It catalyses the reaction 2-(2-carboxy-4-methylthiazol-5-yl)ethyl phosphate + 4-amino-2-methyl-5-(diphosphooxymethyl)pyrimidine + 2 H(+) = thiamine phosphate + CO2 + diphosphate. It carries out the reaction 4-methyl-5-(2-phosphooxyethyl)-thiazole + 4-amino-2-methyl-5-(diphosphooxymethyl)pyrimidine + H(+) = thiamine phosphate + diphosphate. It functions in the pathway cofactor biosynthesis; thiamine diphosphate biosynthesis; thiamine phosphate from 4-amino-2-methyl-5-diphosphomethylpyrimidine and 4-methyl-5-(2-phosphoethyl)-thiazole: step 1/1. Functionally, condenses 4-methyl-5-(beta-hydroxyethyl)thiazole monophosphate (THZ-P) and 2-methyl-4-amino-5-hydroxymethyl pyrimidine pyrophosphate (HMP-PP) to form thiamine monophosphate (TMP). The chain is Thiamine-phosphate synthase from Pseudomonas savastanoi pv. phaseolicola (strain 1448A / Race 6) (Pseudomonas syringae pv. phaseolicola (strain 1448A / Race 6)).